The following is a 412-amino-acid chain: Glucose-1-phosphate adenylyltransferase (412 aa).

Alpha-D-glucose 1-phosphate is bound by residues Tyr98, Gly163, 178-179 (EK), and Ser189.

This sequence belongs to the bacterial/plant glucose-1-phosphate adenylyltransferase family. Homotetramer.

It catalyses the reaction alpha-D-glucose 1-phosphate + ATP + H(+) = ADP-alpha-D-glucose + diphosphate. It participates in glycan biosynthesis; glycogen biosynthesis. Involved in the biosynthesis of ADP-glucose, a building block required for the elongation reactions to produce glycogen. Catalyzes the reaction between ATP and alpha-D-glucose 1-phosphate (G1P) to produce pyrophosphate and ADP-Glc. The polypeptide is Glucose-1-phosphate adenylyltransferase (Thermosipho melanesiensis (strain DSM 12029 / CIP 104789 / BI429)).